Consider the following 198-residue polypeptide: DNA damage response protein D (198 aa).

Residues 124–198 form a disordered region; the sequence is SAAPTDPAGP…SEAGENTPAA (75 aa). Over residues 136–180 the composition is skewed to basic and acidic residues; the sequence is PGTDRAERTAAERTASERATHDRASTERPARPRRSAEPEAVRTED.

In terms of biological role, appears to contribute to D.radiodurans capacity to survive exposure to ionizing radiation. May play a role in DNA repair and genome reconstitution. This chain is DNA damage response protein D (ddrD), found in Deinococcus radiodurans (strain ATCC 13939 / DSM 20539 / JCM 16871 / CCUG 27074 / LMG 4051 / NBRC 15346 / NCIMB 9279 / VKM B-1422 / R1).